Here is a 290-residue protein sequence, read N- to C-terminus: tRNA dimethylallyltransferase (290 aa).

Residue 11 to 18 (GPTASGKS) participates in ATP binding. 13 to 18 (TASGKS) contacts substrate. 2 interaction with substrate tRNA regions span residues 36–39 (DSMQ) and 158–162 (QRIVR).

The protein belongs to the IPP transferase family. Monomer. Mg(2+) serves as cofactor.

It carries out the reaction adenosine(37) in tRNA + dimethylallyl diphosphate = N(6)-dimethylallyladenosine(37) in tRNA + diphosphate. Its function is as follows. Catalyzes the transfer of a dimethylallyl group onto the adenine at position 37 in tRNAs that read codons beginning with uridine, leading to the formation of N6-(dimethylallyl)adenosine (i(6)A). This is tRNA dimethylallyltransferase from Bartonella henselae (strain ATCC 49882 / DSM 28221 / CCUG 30454 / Houston 1) (Rochalimaea henselae).